We begin with the raw amino-acid sequence, 327 residues long: RING-H2 finger protein ATL34 (327 aa).

An N-terminal signal peptide occupies residues 1 to 26 (MTIGKSPILLHHHVIFLLLLVLQVSG). Residues 47-67 (AVIIAMLMFTLLFSMLACCVC) traverse the membrane as a helical segment. The RING-type; atypical zinc-finger motif lies at 128–170 (CAICLNEFEDEETLRLMPPCSHAFHASCIDVWLSSRSTCPVCR). The interval 280–327 (LSHMKTLPQARSSREGYRSGSVGSERRGKGKEKEFGEGSFDRLKAEMV) is disordered. Residues 303–327 (SERRGKGKEKEFGEGSFDRLKAEMV) show a composition bias toward basic and acidic residues.

The protein belongs to the RING-type zinc finger family. ATL subfamily.

It is found in the membrane. It carries out the reaction S-ubiquitinyl-[E2 ubiquitin-conjugating enzyme]-L-cysteine + [acceptor protein]-L-lysine = [E2 ubiquitin-conjugating enzyme]-L-cysteine + N(6)-ubiquitinyl-[acceptor protein]-L-lysine.. Its pathway is protein modification; protein ubiquitination. The chain is RING-H2 finger protein ATL34 (ATL34) from Arabidopsis thaliana (Mouse-ear cress).